A 134-amino-acid polypeptide reads, in one-letter code: ATP synthase epsilon chain (134 aa).

This sequence belongs to the ATPase epsilon chain family. As to quaternary structure, F-type ATPases have 2 components, CF(1) - the catalytic core - and CF(0) - the membrane proton channel. CF(1) has five subunits: alpha(3), beta(3), gamma(1), delta(1), epsilon(1). CF(0) has three main subunits: a, b and c.

The protein resides in the cellular thylakoid membrane. Functionally, produces ATP from ADP in the presence of a proton gradient across the membrane. The sequence is that of ATP synthase epsilon chain from Prochlorococcus marinus (strain MIT 9215).